The chain runs to 154 residues: ATP synthase subunit b', chloroplastic (154 aa).

The helical transmembrane segment at 22-42 (GTLPLIAIQFLILMFLLNILL) threads the bilayer.

The protein belongs to the ATPase B chain family. In terms of assembly, F-type ATPases have 2 components, F(1) - the catalytic core - and F(0) - the membrane proton channel. F(1) has five subunits: alpha(3), beta(3), gamma(1), delta(1), epsilon(1). F(0) has four main subunits: a(1), b(1), b'(1) and c(10-14). The alpha and beta chains form an alternating ring which encloses part of the gamma chain. F(1) is attached to F(0) by a central stalk formed by the gamma and epsilon chains, while a peripheral stalk is formed by the delta, b and b' chains.

The protein localises to the plastid. Its subcellular location is the chloroplast thylakoid membrane. Its function is as follows. F(1)F(0) ATP synthase produces ATP from ADP in the presence of a proton or sodium gradient. F-type ATPases consist of two structural domains, F(1) containing the extramembraneous catalytic core and F(0) containing the membrane proton channel, linked together by a central stalk and a peripheral stalk. During catalysis, ATP synthesis in the catalytic domain of F(1) is coupled via a rotary mechanism of the central stalk subunits to proton translocation. Functionally, component of the F(0) channel, it forms part of the peripheral stalk, linking F(1) to F(0). The b'-subunit is a diverged and duplicated form of b found in plants and photosynthetic bacteria. This is ATP synthase subunit b', chloroplastic from Vaucheria litorea (Yellow-green alga).